Here is a 189-residue protein sequence, read N- to C-terminus: Ribonuclease M5 2 (189 aa).

The 84-residue stretch at 8-91 folds into the Toprim domain; sequence SQVIVAEGRD…VFLKRDEAVP (84 aa). Residues E14, D60, and D62 each contribute to the Mg(2+) site.

It belongs to the ribonuclease M5 family. Mg(2+) serves as cofactor.

It is found in the cytoplasm. The enzyme catalyses Endonucleolytic cleavage of RNA, removing 21 and 42 nucleotides, respectively, from the 5'- and 3'-termini of a 5S-rRNA precursor.. Functionally, required for correct processing of both the 5' and 3' ends of 5S rRNA precursor. Cleaves both sides of a double-stranded region yielding mature 5S rRNA in one step. The sequence is that of Ribonuclease M5 2 from Ligilactobacillus salivarius (strain UCC118) (Lactobacillus salivarius).